Here is a 1043-residue protein sequence, read N- to C-terminus: Isoleucine--tRNA ligase (1043 aa).

Residues P46 and H57 each contribute to the L-isoleucyl-5'-AMP site. The 'HIGH' region signature appears at P47–H57. Positions 181 and 184 each coordinate Zn(2+). 2 residues coordinate L-valine: H319 and D328. Zn(2+)-binding residues include C389, C392, C461, C464, C502, and C504. Residues E550, G551, D553, Q554, and H581 each coordinate L-isoleucyl-5'-AMP. Positions K591–S595 match the 'KMSKS' region motif. K594 serves as a coordination point for ATP.

This sequence belongs to the class-I aminoacyl-tRNA synthetase family. IleS type 2 subfamily. In terms of assembly, monomer. Zn(2+) serves as cofactor.

Its subcellular location is the cytoplasm. The enzyme catalyses tRNA(Ile) + L-isoleucine + ATP = L-isoleucyl-tRNA(Ile) + AMP + diphosphate. In terms of biological role, catalyzes the attachment of isoleucine to tRNA(Ile). As IleRS can inadvertently accommodate and process structurally similar amino acids such as valine, to avoid such errors it has two additional distinct tRNA(Ile)-dependent editing activities. One activity is designated as 'pretransfer' editing and involves the hydrolysis of activated Val-AMP. The other activity is designated 'posttransfer' editing and involves deacylation of mischarged Val-tRNA(Ile). The polypeptide is Isoleucine--tRNA ligase (ileS) (Thermus thermophilus (strain ATCC 27634 / DSM 579 / HB8)).